The primary structure comprises 724 residues: Polyribonucleotide nucleotidyltransferase (724 aa).

Mg(2+) contacts are provided by Asp488 and Asp494. One can recognise a KH domain in the interval Pro555–Ile614. The S1 motif domain maps to Gly624 to Lys692. The interval Glu697–Gln724 is disordered. The segment covering Val701–Gln724 has biased composition (low complexity).

The protein belongs to the polyribonucleotide nucleotidyltransferase family. The cofactor is Mg(2+).

The protein resides in the cytoplasm. It carries out the reaction RNA(n+1) + phosphate = RNA(n) + a ribonucleoside 5'-diphosphate. In terms of biological role, involved in mRNA degradation. Catalyzes the phosphorolysis of single-stranded polyribonucleotides processively in the 3'- to 5'-direction. This Ralstonia pickettii (strain 12J) protein is Polyribonucleotide nucleotidyltransferase.